Reading from the N-terminus, the 618-residue chain is Leucine aminopeptidase 2 (618 aa).

A peptide-binding positions include 139–141 and 271–276; these read QCQ and PYGGME. Zn(2+) is bound at residue H300. The active-site Proton acceptor is the E301. Zn(2+) contacts are provided by H304 and E323. Catalysis depends on Y389, which acts as the Proton donor.

This sequence belongs to the peptidase M1 family. It depends on Zn(2+) as a cofactor.

The protein resides in the cytoplasm. Its subcellular location is the nucleus. It catalyses the reaction an epoxide + H2O = an ethanediol. Aminopeptidase that preferentially cleaves di- and tripeptides. Also has low epoxide hydrolase activity (in vitro). Can hydrolyze the epoxide leukotriene LTA(4) but it forms preferentially 5,6-dihydroxy-7,9,11,14-eicosatetraenoic acid rather than the cytokine leukotriene B(4) as the product compared to the homologous mammalian enzyme (in vitro). This is Leucine aminopeptidase 2 from Aspergillus clavatus (strain ATCC 1007 / CBS 513.65 / DSM 816 / NCTC 3887 / NRRL 1 / QM 1276 / 107).